An 836-amino-acid chain; its full sequence is Probable RING finger protein 207 homolog (836 aa).

The RING-type zinc-finger motif lies at 8-42; that stretch reads CTICKNDFEEPILFSCQHTTCRKCSNGSPSCKTCS. The B box-type 1; atypical zinc finger occupies 68-115; that stretch reads EEMEQCANCEQITLPMFYCETCQQSLCLACRNVTHQARMFSSHKIISS. Residues C73, C76, C97, and H102 each coordinate Zn(2+). The B box-type 2; degenerate zinc-finger motif lies at 122 to 164; it reads YSSSLCKDHNEPYILYCSDVRKLVCIQCFNGRPLEERHSFISI. Positions 527-557 form a coiled coil; it reads QNRIMAIEKEEENRRLNQEAKKKEELAGQSA. Over residues 540–552 the composition is skewed to basic and acidic residues; it reads RRLNQEAKKKEEL. The tract at residues 540–571 is disordered; the sequence is RRLNQEAKKKEELAGQSAAMKSLKHGKTKRKE. The span at 561–571 shows a compositional bias: basic residues; sequence SLKHGKTKRKE.

This chain is Probable RING finger protein 207 homolog, found in Caenorhabditis briggsae.